The primary structure comprises 714 residues: Testis-expressed protein 13D (714 aa).

Disordered stretches follow at residues 300–419 (GSFP…GCSD) and 431–675 (RRCK…PASF). 2 stretches are compositionally biased toward basic and acidic residues: residues 307-320 (SRSH…ERSQ) and 366-378 (GNRE…EGPK). Positions 379–392 (RARRMHTLVFRRSH) are enriched in basic residues. The segment covering 403–416 (TVPQGDSRSYSQEG) has biased composition (polar residues). 3 stretches are compositionally biased toward basic and acidic residues: residues 495-505 (CKPEEGPERPQ), 557-567 (CKPEEGPERPQ), and 636-646 (SRSHGVRESPK). The segment at 677–706 (VPVNWKCPWCKAINFSWRTACYKCKKACVP) adopts a RanBP2-type zinc-finger fold.

It belongs to the TEX13 family.

This Homo sapiens (Human) protein is Testis-expressed protein 13D.